Consider the following 369-residue polypeptide: Dof zinc finger protein DOF2.5 (369 aa).

The Dof-type zinc finger occupies 80-134; it reads LNCPRCNSTNTKFCYYNNYSLTQPRYFCKGCRRYWTEGGSLRNVPVGGSSRKNKR. 4 residues coordinate Zn(2+): cysteine 82, cysteine 85, cysteine 107, and cysteine 110. Disordered regions lie at residues 120-149, 203-224, 284-304, and 322-369; these read LRNV…TIPS, EGNG…YGSS, TDHQ…HSDH, and SSSI…GSSW. A compositionally biased stretch (low complexity) spans 214-224; that stretch reads PSSSSSVYGSS. The span at 284–297 shows a compositional bias: polar residues; the sequence is TDHQGLGHNSNNRS. Low complexity predominate over residues 342–362; that stretch reads NNNNNNNSSPNNGYWSGMFST.

In terms of tissue distribution, expressed in the vascular system of the mother plant, but not present in the seed and embryo. In maturing siliques, found all through the funiculus connecting the placenta to the ovule, but not in the ovule.

It localises to the nucleus. Its function is as follows. Transcription factor specifically involved in the maternal control of seed germination. Regulates transcription by binding to a 5'-AA[AG]G-3' consensus core sequence. May ensure the activation of a component that would trigger germination as a consequence of red light perception. This is Dof zinc finger protein DOF2.5 (DOF2.5) from Arabidopsis thaliana (Mouse-ear cress).